Consider the following 238-residue polypeptide: Ion-translocating oxidoreductase complex subunit E (238 aa).

Helical transmembrane passes span 24 to 44 (ALWQ…TLAV), 52 to 72 (LGMG…ISSM), 84 to 104 (VMIG…NAWM), 106 to 126 (ELYK…AVLG), 141 to 161 (ILDG…IGGI), and 195 to 215 (GILL…LLAA).

It belongs to the NqrDE/RnfAE family. The complex is composed of six subunits: RnfA, RnfB, RnfC, RnfD, RnfE and RnfG.

Its subcellular location is the cell inner membrane. Its function is as follows. Part of a membrane-bound complex that couples electron transfer with translocation of ions across the membrane. In Azotobacter vinelandii (strain DJ / ATCC BAA-1303), this protein is Ion-translocating oxidoreductase complex subunit E.